A 1139-amino-acid chain; its full sequence is DNA-directed RNA polymerase subunit beta (1139 aa).

The segment at 1085–1139 is disordered; it reads ADTSNRHTPSRPTYESVTSEDLSPSPAFTRVLRTADANASRSLEEDEDEEEEEDF. Over residues 1086 to 1106 the composition is skewed to polar residues; that stretch reads DTSNRHTPSRPTYESVTSEDL. The span at 1128 to 1139 shows a compositional bias: acidic residues; that stretch reads EEDEDEEEEEDF.

This sequence belongs to the RNA polymerase beta chain family. In cyanobacteria the RNAP catalytic core is composed of 2 alpha, 1 beta, 1 beta', 1 gamma and 1 omega subunit. When a sigma factor is associated with the core the holoenzyme is formed, which can initiate transcription.

The catalysed reaction is RNA(n) + a ribonucleoside 5'-triphosphate = RNA(n+1) + diphosphate. DNA-dependent RNA polymerase catalyzes the transcription of DNA into RNA using the four ribonucleoside triphosphates as substrates. The protein is DNA-directed RNA polymerase subunit beta of Synechococcus sp. (strain JA-2-3B'a(2-13)) (Cyanobacteria bacterium Yellowstone B-Prime).